We begin with the raw amino-acid sequence, 249 residues long: Ribosomal RNA small subunit methyltransferase J (249 aa).

S-adenosyl-L-methionine contacts are provided by residues 99–100 (RD), 115–116 (ER), 151–152 (SS), and Asp-169.

The protein belongs to the methyltransferase superfamily. RsmJ family.

The protein localises to the cytoplasm. The catalysed reaction is guanosine(1516) in 16S rRNA + S-adenosyl-L-methionine = N(2)-methylguanosine(1516) in 16S rRNA + S-adenosyl-L-homocysteine + H(+). Functionally, specifically methylates the guanosine in position 1516 of 16S rRNA. In Shewanella oneidensis (strain ATCC 700550 / JCM 31522 / CIP 106686 / LMG 19005 / NCIMB 14063 / MR-1), this protein is Ribosomal RNA small subunit methyltransferase J.